The following is a 481-amino-acid chain: N-succinylglutamate 5-semialdehyde dehydrogenase (481 aa).

An NAD(+)-binding site is contributed by 206–211; the sequence is GSARTG. Catalysis depends on residues Glu-229 and Cys-263.

It belongs to the aldehyde dehydrogenase family. AstD subfamily.

It carries out the reaction N-succinyl-L-glutamate 5-semialdehyde + NAD(+) + H2O = N-succinyl-L-glutamate + NADH + 2 H(+). Its pathway is amino-acid degradation; L-arginine degradation via AST pathway; L-glutamate and succinate from L-arginine: step 4/5. Functionally, catalyzes the NAD-dependent reduction of succinylglutamate semialdehyde into succinylglutamate. This is N-succinylglutamate 5-semialdehyde dehydrogenase from Sphingopyxis alaskensis (strain DSM 13593 / LMG 18877 / RB2256) (Sphingomonas alaskensis).